A 314-amino-acid chain; its full sequence is Diisopropyl-fluorophosphatase (314 aa).

Ca(2+) is bound by residues glutamate 21, asparagine 120, asparagine 175, aspartate 229, aspartate 232, leucine 273, and histidine 274. The active-site Proton acceptor is the histidine 287.

Monomer. Requires Ca(2+) as cofactor.

The catalysed reaction is diisopropyl fluorophosphate + H2O = diisopropyl phosphate + fluoride + 2 H(+). Inhibited by chelating agents. Functionally, biological function and substrate unknown. However, it is capable of acting on phosphorus anhydride bonds (such as phosphorus-halide and phosphorus-cyanide) in organophosphorus compounds (including nerve gases). This chain is Diisopropyl-fluorophosphatase, found in Loligo vulgaris (Common European squid).